The primary structure comprises 286 residues: Phosducin-like protein 2 (286 aa).

Phosphoserine occurs at positions 35 and 62. Residues 96–286 (FGEVFHINKP…INDDDDGFFD (191 aa)) are thioredoxin fold.

The protein belongs to the phosducin family. In terms of assembly, interacts with the G protein beta-gamma subunit complex (STE4-STE18 complex). Interacts with CCT2; this interaction leads to inhibition of CCT complex mediated actin folding.

It is found in the cytoplasm. In terms of biological role, essential for cell growth. Inhibits early G-protein signaling events following pheromone stimulation. Inhibits the folding activity of the chaperonin-containing T-complex (CCT) CCT2 which leads to inhibition of cytoskeletal actin folding. Plays a role in cell cycle progression in G1/S phase. The sequence is that of Phosducin-like protein 2 from Saccharomyces cerevisiae (strain ATCC 204508 / S288c) (Baker's yeast).